We begin with the raw amino-acid sequence, 213 residues long: A-type ATP synthase subunit D (213 aa).

It belongs to the V-ATPase D subunit family. In terms of assembly, has multiple subunits with at least A(3), B(3), C, D, E, F, H, I and proteolipid K(x).

It is found in the cell membrane. In terms of biological role, component of the A-type ATP synthase that produces ATP from ADP in the presence of a proton gradient across the membrane. This is A-type ATP synthase subunit D from Thermoplasma acidophilum (strain ATCC 25905 / DSM 1728 / JCM 9062 / NBRC 15155 / AMRC-C165).